The primary structure comprises 198 residues: Mitrocomin (198 aa).

A propeptide spanning residues 1-8 (MSMGSRYA) is cleaved from the precursor. EF-hand domains lie at 19–54 (KWIARHKHMFNFLDINSNGQINLNEMVHKASNIICK), 118–147 (DALFDIIDKDRNGSVSLDEWIQYTHCAGIQ), and 148–183 (QSRGQCEATFAHCDLDGDGKLDVDEMTRQHLGFWYS). Residues Asp32, Asn34, Asn36, Gln38, Glu43, Asp125, Asp127, Asn129, Ser131, Glu136, Asp161, Asp163, Asp165, Lys167, and Glu172 each coordinate Ca(2+).

Belongs to the aequorin family.

In terms of biological role, ca(2+)-dependent bioluminescence photoprotein. Displays an emission peak at 470 nm (blue light). Trace amounts of calcium ion trigger the intramolecular oxidation of the chromophore, coelenterazine into coelenteramide and CO(2) with the concomitant emission of light. This Mitrocoma cellularia (Cross jellyfish) protein is Mitrocomin (MI17).